The following is a 435-amino-acid chain: Probable exopolygalacturonase B (435 aa).

The N-terminal stretch at 1–15 is a signal peptide; it reads MKFFLATLFASAVSS. 3 N-linked (GlcNAc...) asparagine glycosylation sites follow: Asn59, Asn184, and Asn224. 5 PbH1 repeats span residues 208-239, 240-261, 262-283, 294-315, and 326-347; these read SKDVSFDDVYIHAFSTNKSALPKNSDGFDSLN, VDGLTVTNTRVDVGDDCFSPKP, NTTNIFVQNLLCNNTHGVSMGS, IEHAYIENVTLLNGQNGARLKA, and INNITYKNIRIENTDAPVVLDQ. Residue Asp254 is the Proton donor of the active site. A disulfide bridge links Cys256 with Cys273. 2 N-linked (GlcNAc...) asparagine glycosylation sites follow: Asn262 and Asn274. Residue His277 is part of the active site. 4 N-linked (GlcNAc...) asparagine glycosylation sites follow: Asn301, Asn328, Asn365, and Asn373. The stretch at 366–388 is one PbH1 6 repeat; sequence VTNILFENISGTSSGKNGKVVAD. Cys391 and Cys397 are joined by a disulfide. N-linked (GlcNAc...) asparagine glycosylation occurs at Asn406.

It belongs to the glycosyl hydrolase 28 family.

It localises to the secreted. The enzyme catalyses [(1-&gt;4)-alpha-D-galacturonosyl](n) + H2O = alpha-D-galacturonate + [(1-&gt;4)-alpha-D-galacturonosyl](n-1). Specific in hydrolyzing the terminal glycosidic bond of polygalacturonic acid and oligogalacturonates. This Aspergillus flavus (strain ATCC 200026 / FGSC A1120 / IAM 13836 / NRRL 3357 / JCM 12722 / SRRC 167) protein is Probable exopolygalacturonase B (pgxB).